A 315-amino-acid chain; its full sequence is Glutamyl-Q tRNA(Asp) synthetase (315 aa).

Residues 21-25 and Glu-63 contribute to the L-glutamate site; that span reads RFAPS. The short motif at 24–34 is the 'HIGH' region element; the sequence is PSPSGLLHFGS. Zn(2+) contacts are provided by Cys-119, Cys-121, Tyr-133, and Cys-137. Tyr-190 and Arg-208 together coordinate L-glutamate. The 'KMSKS' region signature appears at 251 to 255; the sequence is KLSKQ. Lys-254 is an ATP binding site.

The protein belongs to the class-I aminoacyl-tRNA synthetase family. GluQ subfamily. Requires Zn(2+) as cofactor.

Catalyzes the tRNA-independent activation of glutamate in presence of ATP and the subsequent transfer of glutamate onto a tRNA(Asp). Glutamate is transferred on the 2-amino-5-(4,5-dihydroxy-2-cyclopenten-1-yl) moiety of the queuosine in the wobble position of the QUC anticodon. The polypeptide is Glutamyl-Q tRNA(Asp) synthetase (Colwellia psychrerythraea (strain 34H / ATCC BAA-681) (Vibrio psychroerythus)).